Consider the following 335-residue polypeptide: UPF0353 protein Mvan_2751 (335 aa).

2 consecutive transmembrane segments (helical) span residues 18–38 (WFFLFFLVVLGLVALYVIVQM) and 67–87 (LPAVLLILSLMSFTVAMAGPT). The VWFA domain occupies 98 to 294 (VVMLVIDVSQ…EQLKQVFTNL (197 aa)). A helical transmembrane segment spans residues 309-329 (VGWLRIGSLVLALAALGALLI).

Belongs to the UPF0353 family.

It is found in the cell membrane. In Mycolicibacterium vanbaalenii (strain DSM 7251 / JCM 13017 / BCRC 16820 / KCTC 9966 / NRRL B-24157 / PYR-1) (Mycobacterium vanbaalenii), this protein is UPF0353 protein Mvan_2751.